We begin with the raw amino-acid sequence, 372 residues long: Bifunctional enzyme IspD/IspF (372 aa).

A 2-C-methyl-D-erythritol 4-phosphate cytidylyltransferase region spans residues 1–211 (MLDISLIMLG…SALKAPENEL (211 aa)). Residues 212 to 372 (FVGSGFDVHE…SLKFYNWTQI (161 aa)) are 2-C-methyl-D-erythritol 2,4-cyclodiphosphate synthase. A divalent metal cation-binding residues include aspartate 218 and histidine 220. Residues 218-220 (DVH) and 244-245 (HS) contribute to the 4-CDP-2-C-methyl-D-erythritol 2-phosphate site. Histidine 252 lines the a divalent metal cation pocket. Residues 266–268 (DIG), 271–275 (FPDTD), 342–345 (TTTE), phenylalanine 349, and arginine 352 each bind 4-CDP-2-C-methyl-D-erythritol 2-phosphate.

In the N-terminal section; belongs to the IspD/TarI cytidylyltransferase family. IspD subfamily. The protein in the C-terminal section; belongs to the IspF family. Requires a divalent metal cation as cofactor.

It carries out the reaction 2-C-methyl-D-erythritol 4-phosphate + CTP + H(+) = 4-CDP-2-C-methyl-D-erythritol + diphosphate. The enzyme catalyses 4-CDP-2-C-methyl-D-erythritol 2-phosphate = 2-C-methyl-D-erythritol 2,4-cyclic diphosphate + CMP. The protein operates within isoprenoid biosynthesis; isopentenyl diphosphate biosynthesis via DXP pathway; isopentenyl diphosphate from 1-deoxy-D-xylulose 5-phosphate: step 2/6. It functions in the pathway isoprenoid biosynthesis; isopentenyl diphosphate biosynthesis via DXP pathway; isopentenyl diphosphate from 1-deoxy-D-xylulose 5-phosphate: step 4/6. In terms of biological role, bifunctional enzyme that catalyzes the formation of 4-diphosphocytidyl-2-C-methyl-D-erythritol from CTP and 2-C-methyl-D-erythritol 4-phosphate (MEP) (IspD), and catalyzes the conversion of 4-diphosphocytidyl-2-C-methyl-D-erythritol 2-phosphate (CDP-ME2P) to 2-C-methyl-D-erythritol 2,4-cyclodiphosphate (ME-CPP) with a corresponding release of cytidine 5-monophosphate (CMP) (IspF). This chain is Bifunctional enzyme IspD/IspF, found in Campylobacter concisus (strain 13826).